The primary structure comprises 152 residues: Globin, minor (152 aa).

Residues 12–152 enclose the Globin domain; that stretch reads VNNSYHKDLL…ALIAVVQAAL (141 aa). Histidine 104 lines the heme b pocket.

The protein belongs to the globin family.

The polypeptide is Globin, minor (Anadara trapezia (Sydney cockle)).